Consider the following 445-residue polypeptide: MSNILQSVPVNQKVGIAFSGGLDTSAALHWMRQKGAIPYAYTANLGQPDETDYNAIPEKAKAYGAELARLIDCREQLVAEGIAALQSGAFHISTAGVTYFNTTPLGRAVTGTMLVAAMKEDNVDIWGDGSTFKGNDIERFYRYGLLMNPALRIYKPWLDDAFINELGGRKEMSEFLIKSGFDYKMSTEKAYSTDSNILGATHEAKDLEELSSGMQIVEPIMGVAFWRDDVEVKRETVTVRFEEGRPIALNGVVYTDLVELMLEANRIGGRHGLGMSDQIENRIIEAKSRGIYEAPGLALLFIAYERLITGIHNEDTIEQYRESGRRLGRLLYQGRWFDPQAIMLREAAQRWVARAITGEVTIELRRGNDYSILNTVSANLTYAPERLSMEKVEDAPFSPADRIGQLTMRNLDITDTRHKLAIYSSAGLLTGNSSVALPSFEKDKK.

ATP contacts are provided by residues 17-25 (AFSGGLDTS) and Ala43. Residue Tyr99 coordinates L-citrulline. ATP is bound by residues Gly129 and Thr131. L-aspartate contacts are provided by Thr131, Asn135, and Asp136. Asn135 lines the L-citrulline pocket. An ATP-binding site is contributed by Asp136. Positions 139 and 192 each coordinate L-citrulline. Asp194 lines the ATP pocket. L-citrulline-binding residues include Thr201, Glu203, and Glu280.

It belongs to the argininosuccinate synthase family. Type 2 subfamily. Homotetramer.

Its subcellular location is the cytoplasm. It catalyses the reaction L-citrulline + L-aspartate + ATP = 2-(N(omega)-L-arginino)succinate + AMP + diphosphate + H(+). Its pathway is amino-acid biosynthesis; L-arginine biosynthesis; L-arginine from L-ornithine and carbamoyl phosphate: step 2/3. In Herminiimonas arsenicoxydans, this protein is Argininosuccinate synthase.